A 96-amino-acid polypeptide reads, in one-letter code: Phosphoribosyl-ATP pyrophosphatase (96 aa).

The protein belongs to the PRA-PH family.

It localises to the cytoplasm. The enzyme catalyses 1-(5-phospho-beta-D-ribosyl)-ATP + H2O = 1-(5-phospho-beta-D-ribosyl)-5'-AMP + diphosphate + H(+). Its pathway is amino-acid biosynthesis; L-histidine biosynthesis; L-histidine from 5-phospho-alpha-D-ribose 1-diphosphate: step 2/9. The protein is Phosphoribosyl-ATP pyrophosphatase of Methanobrevibacter smithii (strain ATCC 35061 / DSM 861 / OCM 144 / PS).